Here is a 467-residue protein sequence, read N- to C-terminus: NALCN channel auxiliary factor 1 (467 aa).

A helical transmembrane segment spans residues 40–60 (LSLASLLFFTVLLSDHLWFCA). Residues 121 to 161 (MGESSPAAQAHRLLSASSSPTLPPSPGGGGGSKGNRGKNNR) are disordered. 3 N-linked (GlcNAc...) asparagine glycosylation sites follow: asparagine 160, asparagine 226, and asparagine 254. Cystine bridges form between cysteine 200/cysteine 270, cysteine 235/cysteine 322, cysteine 255/cysteine 270, cysteine 313/cysteine 350, cysteine 333/cysteine 386, cysteine 339/cysteine 385, and cysteine 343/cysteine 370. A compositionally biased stretch (basic and acidic residues) spans 390–408 (SEEQTAPRPKGTVDRRDSC). The interval 390 to 409 (SEEQTAPRPKGTVDRRDSCP) is disordered. A helical membrane pass occupies residues 426–446 (LKLCVLVLILLHTVLTASAAQ). Residue asparagine 462 is glycosylated (N-linked (GlcNAc...) asparagine).

It belongs to the NALF family. In terms of assembly, component of the NALCN channel complex. NALCN complex consists of NALCN and auxiliary subunits, UNC79, UNC80 and NACL1. These auxiliary subunits are essential for the NALCN channel function.

Its subcellular location is the cell membrane. Auxillary component of the NALCN sodium channel complex, a channel that regulates the resting membrane potential and controls neuronal excitability. The polypeptide is NALCN channel auxiliary factor 1 (Mus musculus (Mouse)).